Consider the following 356-residue polypeptide: Zinc finger CW-type PWWP domain protein 2 (356 aa).

The CW-type zinc-finger motif lies at M24 to P79. Zn(2+) is bound by residues C33, C38, C60, and C71. Residues L98–T162 form the PWWP domain. Residues Q279–C307 form a disordered region.

Histone methylation reader which binds to non-methylated (H3K4me0), monomethylated (H3K4me1), dimethylated (H3K4me2) and trimethylated (H3K4me3) 'Lys-4' on histone H3. The order of binding preference is H3K4me3 &gt; H3K4me2 &gt; H3K4me1 &gt; H3K4me0. This is Zinc finger CW-type PWWP domain protein 2 (ZCWPW2) from Homo sapiens (Human).